The chain runs to 546 residues: CTP synthase (546 aa).

Residues 1–266 form an amidoligase domain region; sequence MTTRYIFVTG…DQLVTKRFGI (266 aa). S14 serves as a coordination point for CTP. S14 contacts UTP. ATP is bound by residues 15–20 and D72; that span reads SLGKGI. D72 and E140 together coordinate Mg(2+). Residues 147–149, 187–192, and K223 each bind CTP; these read DIE and KTKPTQ. UTP contacts are provided by residues 187 to 192 and K223; that span reads KTKPTQ. 239-241 serves as a coordination point for ATP; that stretch reads KDV. The region spanning 291 to 542 is the Glutamine amidotransferase type-1 domain; sequence TIGMVGKYIE…VAAAAAYQKR (252 aa). G352 contributes to the L-glutamine binding site. C379 acts as the Nucleophile; for glutamine hydrolysis in catalysis. L-glutamine contacts are provided by residues 380–383, E403, and R470; that span reads LGMQ. Residues H515 and E517 contribute to the active site.

The protein belongs to the CTP synthase family. As to quaternary structure, homotetramer.

The catalysed reaction is UTP + L-glutamine + ATP + H2O = CTP + L-glutamate + ADP + phosphate + 2 H(+). The enzyme catalyses L-glutamine + H2O = L-glutamate + NH4(+). It catalyses the reaction UTP + NH4(+) + ATP = CTP + ADP + phosphate + 2 H(+). It participates in pyrimidine metabolism; CTP biosynthesis via de novo pathway; CTP from UDP: step 2/2. Allosterically activated by GTP, when glutamine is the substrate; GTP has no effect on the reaction when ammonia is the substrate. The allosteric effector GTP functions by stabilizing the protein conformation that binds the tetrahedral intermediate(s) formed during glutamine hydrolysis. Inhibited by the product CTP, via allosteric rather than competitive inhibition. Its function is as follows. Catalyzes the ATP-dependent amination of UTP to CTP with either L-glutamine or ammonia as the source of nitrogen. Regulates intracellular CTP levels through interactions with the four ribonucleotide triphosphates. The polypeptide is CTP synthase (Shewanella pealeana (strain ATCC 700345 / ANG-SQ1)).